The sequence spans 122 residues: Large ribosomal subunit protein uL14 (122 aa).

It belongs to the universal ribosomal protein uL14 family. In terms of assembly, part of the 50S ribosomal subunit. Forms a cluster with proteins L3 and L19. In the 70S ribosome, L14 and L19 interact and together make contacts with the 16S rRNA in bridges B5 and B8.

Its function is as follows. Binds to 23S rRNA. Forms part of two intersubunit bridges in the 70S ribosome. This is Large ribosomal subunit protein uL14 from Pseudomonas aeruginosa (strain LESB58).